The chain runs to 178 residues: Large ribosomal subunit protein uL30 (178 aa).

It belongs to the universal ribosomal protein uL30 family. In terms of assembly, part of the 50S ribosomal subunit.

The sequence is that of Large ribosomal subunit protein uL30 from Pyrobaculum aerophilum (strain ATCC 51768 / DSM 7523 / JCM 9630 / CIP 104966 / NBRC 100827 / IM2).